The sequence spans 279 residues: Shikimate dehydrogenase (NADP(+)) (279 aa).

Shikimate contacts are provided by residues 20–22 and Thr67; that span reads SRS. Lys71 (proton acceptor) is an active-site residue. An NADP(+)-binding site is contributed by Asp83. Asn92 and Asp108 together coordinate shikimate. NADP(+)-binding positions include 134 to 138 and Leu223; that span reads GAGGA. Residue Tyr225 coordinates shikimate. NADP(+) is bound at residue Gly246.

It belongs to the shikimate dehydrogenase family. As to quaternary structure, homodimer.

The enzyme catalyses shikimate + NADP(+) = 3-dehydroshikimate + NADPH + H(+). It participates in metabolic intermediate biosynthesis; chorismate biosynthesis; chorismate from D-erythrose 4-phosphate and phosphoenolpyruvate: step 4/7. Involved in the biosynthesis of the chorismate, which leads to the biosynthesis of aromatic amino acids. Catalyzes the reversible NADPH linked reduction of 3-dehydroshikimate (DHSA) to yield shikimate (SA). This chain is Shikimate dehydrogenase (NADP(+)), found in Cereibacter sphaeroides (strain ATCC 17025 / ATH 2.4.3) (Rhodobacter sphaeroides).